A 357-amino-acid polypeptide reads, in one-letter code: Histidinol-phosphate aminotransferase (357 aa).

The residue at position 218 (lysine 218) is an N6-(pyridoxal phosphate)lysine.

The protein belongs to the class-II pyridoxal-phosphate-dependent aminotransferase family. Histidinol-phosphate aminotransferase subfamily. As to quaternary structure, homodimer. Pyridoxal 5'-phosphate is required as a cofactor.

The catalysed reaction is L-histidinol phosphate + 2-oxoglutarate = 3-(imidazol-4-yl)-2-oxopropyl phosphate + L-glutamate. The protein operates within amino-acid biosynthesis; L-histidine biosynthesis; L-histidine from 5-phospho-alpha-D-ribose 1-diphosphate: step 7/9. In Prosthecochloris aestuarii (strain DSM 271 / SK 413), this protein is Histidinol-phosphate aminotransferase.